The sequence spans 277 residues: 2-dehydro-3-deoxyphosphooctonate aldolase (277 aa).

The protein belongs to the KdsA family.

Its subcellular location is the cytoplasm. It catalyses the reaction D-arabinose 5-phosphate + phosphoenolpyruvate + H2O = 3-deoxy-alpha-D-manno-2-octulosonate-8-phosphate + phosphate. It functions in the pathway carbohydrate biosynthesis; 3-deoxy-D-manno-octulosonate biosynthesis; 3-deoxy-D-manno-octulosonate from D-ribulose 5-phosphate: step 2/3. Its pathway is bacterial outer membrane biogenesis; lipopolysaccharide biosynthesis. The sequence is that of 2-dehydro-3-deoxyphosphooctonate aldolase from Hydrogenovibrio crunogenus (strain DSM 25203 / XCL-2) (Thiomicrospira crunogena).